The chain runs to 617 residues: MGKSLEWADLDYELQPWIKKAINVSGFDSMTPVQASTIPMFAKNKDVVVESVTGSGKTIAFVIPILEKIISEGINNSKFKKGHFYSLILAPTRELSMQIQNVVSSFLEHYPEDQYPIRSQLVVGTNEKSVRDDVNTLLDERPQILIGTPGRVLDFLQSPSVKTSSCGMVVLDEADRLLDVSFFKDVEKILNVLPKQRRTGLFSATISSAGTLIFKTGLRNPVKITVNSQGKNAPTTLNLFYSVMKPEEKLQNLIHIMNNIRFKKCIVYFSTCVSVTFFYQYLKYLQQTDKTLREDLQVISIHGKLTTQSRRKALSTFTESLSDCILLTTDVAARGIDIPDVDLVLQIDPPTDADIFLHRCGRTGRANKIGRAIVFLNEGREEDYIPFMEVKNVDIEETDINKNKISNDNNDEFYQRFTKWLLSDRANYDLSVKSYVAFIRYYSKHSATSIFRLQSLDYVSLGKMYGLFRLPRMPEITKYLQDKEKSGETVVGYYGEGWLMNPPPIDMDKYAYQDKKREKARIEELKNLAQINDKKKLKAELKKKNMAWSSKTMTKEERQERRKKLDLKRKAIELEIAAEAERDESDTEITQDWKDEILQKKKKKKVGSEMQGSFDDL.

Residues 7–35 (WADLDYELQPWIKKAINVSGFDSMTPVQA) carry the Q motif motif. One can recognise a Helicase ATP-binding domain in the interval 38–224 (IPMFAKNKDV…KTGLRNPVKI (187 aa)). 51–58 (SVTGSGKT) is a binding site for ATP. The short motif at 172–175 (DEAD) is the DEAD box element. Residues 252–406 (NLIHIMNNIR…ETDINKNKIS (155 aa)) form the Helicase C-terminal domain.

It belongs to the DEAD box helicase family. DDX55/SPB4 subfamily. As to quaternary structure, component of pre-60S ribosomal complexes.

The protein localises to the nucleus. Its subcellular location is the nucleolus. The enzyme catalyses ATP + H2O = ADP + phosphate + H(+). Its function is as follows. ATP-binding RNA helicase involved in the biogenesis of 60S ribosomal subunits. Binds 90S pre-ribosomal particles and dissociates from pre-60S ribosomal particles after processing of 27SB pre-rRNA. Required for the normal formation of 18S rRNA through the processing of pre-rRNAs at sites A0, A1 and A2, and the normal formation of 25S and 5.8S rRNAs through the processing of pre-rRNAs at sites C1 and C2. The protein is ATP-dependent rRNA helicase SPB4 of Candida glabrata (strain ATCC 2001 / BCRC 20586 / JCM 3761 / NBRC 0622 / NRRL Y-65 / CBS 138) (Yeast).